The following is a 105-amino-acid chain: Met repressor (105 aa).

This sequence belongs to the MetJ family. Homodimer.

Its subcellular location is the cytoplasm. Its function is as follows. This regulatory protein, when combined with SAM (S-adenosylmethionine) represses the expression of the methionine regulon and of enzymes involved in SAM synthesis. The polypeptide is Met repressor (Vibrio vulnificus (strain CMCP6)).